Reading from the N-terminus, the 144-residue chain is Large ribosomal subunit protein uL15 (144 aa).

The disordered stretch occupies residues 1-51 (MKLNELKPATGSRSKRLRKGRGLSSGHGFTSGRGTKGQKAHGKTRLGFEGG). Residues 23 to 35 (LSSGHGFTSGRGT) are compositionally biased toward gly residues.

The protein belongs to the universal ribosomal protein uL15 family. As to quaternary structure, part of the 50S ribosomal subunit.

In terms of biological role, binds to the 23S rRNA. This chain is Large ribosomal subunit protein uL15, found in Limosilactobacillus reuteri (strain DSM 20016) (Lactobacillus reuteri).